The chain runs to 817 residues: MEYNFREIEKKWQQKWFSQNKYKVTEDSPKPKYYVLEMFPYPSGKLHMGHVRNYSIGDVFARFMRLKGYNVLHPMGWDAFGLPAENAAIKHGIHPSDWTWSNIENMKRQLKELGISYDWDREVATCHPDYYKWTQWMFLQFYKAGLAYRKRSYVNWCPSCETVLANEQVVNGRCERCKSLVGKKDLEQWFFRITKYAERLLRDIDKLDGWPEKVKIMQKNWIGRSEGAEIEFEIDGLGKRIKVFTTRPDTLFGVTYLVLAPEHPLTKEIIAGKPQEKECLEFIEKMQYLNEIERTSTETEKEGRFTGGYAIHPLTGKKVPIYIANYVLVDYGTGAVMGVPAHDQRDFEFAKKYNLPIKVVIKGDGVDIQNLQSAYEGEGVLINSGEFNGLKNTEAMKKITEYLEKNGYGKACVTYKLRDWLISRQRYWGAPIPIVYCDDCGIVPVPEEELPVLLPYNVEFKPTGQSPLAYCEEFVNTTCPKCGKPARRETDTMDTFICSSWYYFRYTDPKNSEKPFEKSLVDYWLPVDQYIGGVEHAILHLLYSRFFTKVLYDLGYISFEEPFKNLLTQGMVLKDGAKMSKSLGNIVSPEEIVEKYGADTARLFILFAAPPERDLEWSDQGVEGCFRFLNRLWRLYIELKDKLSDSSLPGQSELDDELNYRLNYTIKKVTEDIGERFNFNTAISSIMELLNFLYDYKEKGSLNRELILKTLKNFLILIYPFTPHIACELWEIMGFEGDIEDVSWPEYDESALVRKNVEIAVQINGKVRARFDVPVDISEEELKQKIMNNEKIKTLLEGKEIVKFIYVKNRLVNIVIK.

The 'HIGH' region motif lies at 40–50 (PYPSGKLHMGH). Residues 578–582 (KMSKS) carry the 'KMSKS' region motif. Lysine 581 is an ATP binding site.

The protein belongs to the class-I aminoacyl-tRNA synthetase family.

It is found in the cytoplasm. The enzyme catalyses tRNA(Leu) + L-leucine + ATP = L-leucyl-tRNA(Leu) + AMP + diphosphate. The chain is Leucine--tRNA ligase from Caldicellulosiruptor saccharolyticus (strain ATCC 43494 / DSM 8903 / Tp8T 6331).